Reading from the N-terminus, the 155-residue chain is Large ribosomal subunit protein eL24A (155 aa).

Phosphoserine is present on Ser7. Residues 66–155 (EVAKKRSRKT…AFQKVAATSR (90 aa)) form a disordered region. Over residues 89-129 (LIKERRSLKPEVRKANREEKLKANKEKKKAEKAARKAEKAK) the composition is skewed to basic and acidic residues. The segment covering 131–142 (AGTQSSKFSKQQ) has biased composition (polar residues).

The protein belongs to the eukaryotic ribosomal protein eL24 family. As to quaternary structure, component of the large ribosomal subunit (LSU). Mature yeast ribosomes consist of a small (40S) and a large (60S) subunit. The 40S small subunit contains 1 molecule of ribosomal RNA (18S rRNA) and 33 different proteins (encoded by 57 genes). The large 60S subunit contains 3 rRNA molecules (25S, 5.8S and 5S rRNA) and 46 different proteins (encoded by 81 genes).

The protein resides in the cytoplasm. Functionally, component of the ribosome, a large ribonucleoprotein complex responsible for the synthesis of proteins in the cell. The small ribosomal subunit (SSU) binds messenger RNAs (mRNAs) and translates the encoded message by selecting cognate aminoacyl-transfer RNA (tRNA) molecules. The large subunit (LSU) contains the ribosomal catalytic site termed the peptidyl transferase center (PTC), which catalyzes the formation of peptide bonds, thereby polymerizing the amino acids delivered by tRNAs into a polypeptide chain. The nascent polypeptides leave the ribosome through a tunnel in the LSU and interact with protein factors that function in enzymatic processing, targeting, and the membrane insertion of nascent chains at the exit of the ribosomal tunnel. This Saccharomyces cerevisiae (strain ATCC 204508 / S288c) (Baker's yeast) protein is Large ribosomal subunit protein eL24A.